A 574-amino-acid chain; its full sequence is Myo-inositol transporter FST1 (574 aa).

Residues 1–76 (MGKSRQNSTT…VQFANPKHFT (76 aa)) are Cytoplasmic-facing. A helical transmembrane segment spans residues 77-97 (WLLVAFASMGGLLSGLDQSLI). Residues 98–115 (SGANLFLPDDLGLTEHEN) are Extracellular-facing. Residues 116-136 (SLVNSGMPLGAVGGALLLSPA) traverse the membrane as a helical segment. Residues 137–143 (NEYFGRK) lie on the Cytoplasmic side of the membrane. The helical transmembrane segment at 144-164 (GAIIISIILYTIGAALEAGSI) threads the bilayer. Residues 165 to 173 (NFGMIVSSR) lie on the Extracellular side of the membrane. A helical membrane pass occupies residues 174–194 (VILGLGVGLEGGTVPVYVAET). Over 195–205 (VERRIRGNLVS) the chain is Cytoplasmic. Residues 206 to 226 (LYQFNIALGEVLGYAVGAIFL) traverse the membrane as a helical segment. Topologically, residues 227 to 233 (NVPGNWR) are extracellular. Residues 234–254 (YILGSSLLFSTIMFFGMLFLP) traverse the membrane as a helical segment. The Cytoplasmic segment spans residues 255–330 (ESPRFLIHQK…RARRALVYAN (76 aa)). Residues 331-351 (IMILLGQLTGVNAIMYYMSVL) form a helical membrane-spanning segment. Residues 352–363 (MNQIGFDKKESN) are Extracellular-facing. Residues 364–384 (YMSLVGGGSLLLGTIPAIFLM) traverse the membrane as a helical segment. Residues 385–390 (ERFGRR) lie on the Cytoplasmic side of the membrane. A helical transmembrane segment spans residues 391–411 (FWAITMLPGFFIGLVLIGVSY). The Extracellular portion of the chain corresponds to 412–426 (QFDVETQLQTVEGLY). The helical transmembrane segment at 427–447 (LSGLIIYMGFFGSYACLTWVV) threads the bilayer. Residues 448-465 (PSEVYPTYLRSYGMTTSD) lie on the Cytoplasmic side of the membrane. A helical membrane pass occupies residues 466 to 486 (ALLFLASFIVTYNFTAMQNAM). The Extracellular portion of the chain corresponds to 487-490 (GKTG). The helical transmembrane segment at 491–511 (LALGFYGGIAFIGEIYQIFFM) threads the bilayer. The Cytoplasmic segment spans residues 512-574 (PETKNKTLEE…PKDQVQVSHA (63 aa)).

Belongs to the major facilitator superfamily. Sugar transporter (TC 2.A.1.1) family.

It is found in the cell membrane. The catalysed reaction is myo-inositol(out) + H(+)(out) = myo-inositol(in) + H(+)(in). Its function is as follows. Transporter for myo-inositol. Also appears to transport the polyketide mycotoxin fumonisin B1 (FB1). Does not appear to transport hexose sugars. The chain is Myo-inositol transporter FST1 from Gibberella moniliformis (strain M3125 / FGSC 7600) (Maize ear and stalk rot fungus).